Reading from the N-terminus, the 527-residue chain is Probable malate:quinone oxidoreductase 2 (527 aa).

This sequence belongs to the MQO family. Requires FAD as cofactor.

The enzyme catalyses (S)-malate + a quinone = a quinol + oxaloacetate. It participates in carbohydrate metabolism; tricarboxylic acid cycle; oxaloacetate from (S)-malate (quinone route): step 1/1. This is Probable malate:quinone oxidoreductase 2 from Pseudomonas putida (strain ATCC 47054 / DSM 6125 / CFBP 8728 / NCIMB 11950 / KT2440).